The following is a 194-amino-acid chain: Adenylate kinase isoenzyme 1 (194 aa).

At Met-1 the chain carries N-acetylmethionine. 18-23 contributes to the ATP binding site; the sequence is GSGKGT. Ser-38 is subject to Phosphoserine. The segment at 38-67 is NMP; that stretch reads STGDLLRAEVSSGSSRGKMLSSIMEKGELV. Residues Thr-39, Arg-44, 65–67, 94–97, and Gln-101 each bind AMP; these read ELV and GYPR. Residues 131–141 are LID; it reads KRGETSGRVDD. Position 132 (Arg-132) interacts with ATP. Positions 138 and 149 each coordinate AMP. Gly-177 lines the ATP pocket.

It belongs to the adenylate kinase family. AK1 subfamily. Monomer. Mg(2+) is required as a cofactor.

The protein localises to the cytoplasm. The enzyme catalyses a ribonucleoside 5'-phosphate + ATP = a ribonucleoside 5'-diphosphate + ADP. It catalyses the reaction AMP + ATP = 2 ADP. The catalysed reaction is dAMP + ATP = dADP + ADP. It carries out the reaction dATP + AMP = dADP + ADP. The enzyme catalyses dAMP + dATP = 2 dADP. It catalyses the reaction a 2'-deoxyribonucleoside 5'-diphosphate + ATP = a 2'-deoxyribonucleoside 5'-triphosphate + ADP. The catalysed reaction is a ribonucleoside 5'-diphosphate + ATP = a ribonucleoside 5'-triphosphate + ADP. It carries out the reaction CDP + GTP = CTP + GDP. The enzyme catalyses GDP + ATP = GTP + ADP. It catalyses the reaction UDP + ATP = UTP + ADP. The catalysed reaction is GTP + UDP = UTP + GDP. It carries out the reaction dTDP + GTP = dTTP + GDP. The enzyme catalyses dCDP + GTP = dCTP + GDP. It catalyses the reaction dGDP + ATP = dGTP + ADP. The catalysed reaction is dADP + GTP = dATP + GDP. It carries out the reaction thiamine diphosphate + ADP = thiamine triphosphate + AMP. Its function is as follows. Catalyzes the reversible transfer of the terminal phosphate group between ATP and AMP. Also displays broad nucleoside diphosphate kinase activity. Plays an important role in cellular energy homeostasis and in adenine nucleotide metabolism. Also catalyzes at a very low rate the synthesis of thiamine triphosphate (ThTP) from thiamine diphosphate (ThDP) and ADP. This is Adenylate kinase isoenzyme 1 (Ak1) from Rattus norvegicus (Rat).